A 398-amino-acid polypeptide reads, in one-letter code: Probable beta-1,3-galactosyltransferase 5 (398 aa).

The helical; Signal-anchor for type II membrane protein transmembrane segment at 11-31 (LTMTWVPLLCISCFFLGAIFT) threads the bilayer. N-linked (GlcNAc...) asparagine glycans are attached at residues asparagine 110, asparagine 115, and asparagine 206.

The protein belongs to the glycosyltransferase 31 family. Requires Mn(2+) as cofactor.

The protein resides in the golgi apparatus membrane. It participates in protein modification; protein glycosylation. Beta-1,3-galactosyltransferase that transfers galactose from UDP-galactose to substrates with a terminal glycosyl residue. The polypeptide is Probable beta-1,3-galactosyltransferase 5 (B3GALT5) (Arabidopsis thaliana (Mouse-ear cress)).